A 603-amino-acid polypeptide reads, in one-letter code: Arginine--tRNA ligase (603 aa).

The 'HIGH' region motif lies at 143 to 153 (PNIAKEMHVGH).

The protein belongs to the class-I aminoacyl-tRNA synthetase family. In terms of assembly, monomer.

It is found in the cytoplasm. The catalysed reaction is tRNA(Arg) + L-arginine + ATP = L-arginyl-tRNA(Arg) + AMP + diphosphate. The chain is Arginine--tRNA ligase from Prochlorococcus marinus (strain SARG / CCMP1375 / SS120).